We begin with the raw amino-acid sequence, 208 residues long: UPF0637 protein BCAH820_3975 (208 aa).

Belongs to the UPF0637 family.

The protein is UPF0637 protein BCAH820_3975 of Bacillus cereus (strain AH820).